A 1742-amino-acid chain; its full sequence is Meiosis regulator and mRNA stability factor 1 (1742 aa).

The residue at position 65 (Ser-65) is a Phosphoserine. Residues 351–488 (IGVFWDIENC…ALLHHANELI (138 aa)) enclose the NYN domain. 2 disordered regions span residues 620-642 (PSSA…TRNA) and 655-721 (SKTG…KEKE). The span at 631–642 (SQANSGSATRNA) shows a compositional bias: polar residues. Low complexity predominate over residues 673 to 689 (APPHRSSSAAAPAPKAP). Tyr-696 is modified (phosphotyrosine). Residue Ser-757 is modified to Phosphoserine. The region spanning 788-867 (VDVQISNLDY…KKILVSLATG (80 aa)) is the RRM domain. HTH OST-type domains follow at residues 872–946 (SLSL…SPLG) and 1000–1077 (SLKT…HNKP). Residues Ser-1089 and Ser-1091 each carry the phosphoserine modification. HTH OST-type domains are found at residues 1097–1171 (QLIQ…LTHR), 1173–1247 (QVKR…CIPR), 1257–1332 (RTKQ…TEVE), 1333–1408 (RFKA…INRK), 1409–1484 (SLRA…CVKL), and 1486–1560 (SLYL…LKND). Phosphoserine is present on Ser-1571. Residues 1678–1729 (IRNENLPPDPSSPGVSAAVPAPPSPSSETPESLLSKDPTESPAKKQPKNRVK) form a disordered region. Positions 1703–1712 (SSETPESLLS) are enriched in low complexity.

As to quaternary structure, interacts with LIMK2.

The protein resides in the peroxisome. Its function is as follows. Essential regulator of oogenesis required for female meiotic progression to repress transposable elements and preventing their mobilization, which is essential for the germline integrity. Probably acts via some RNA metabolic process, equivalent to the piRNA system in males, which mediates the repression of transposable elements during meiosis by forming complexes composed of RNAs and governs the methylation and subsequent repression of transposons. Also required to protect from DNA double-strand breaks. This is Meiosis regulator and mRNA stability factor 1 from Bos taurus (Bovine).